A 123-amino-acid polypeptide reads, in one-letter code: UPF0102 protein PputW619_0932 (123 aa).

Belongs to the UPF0102 family.

In Pseudomonas putida (strain W619), this protein is UPF0102 protein PputW619_0932.